A 128-amino-acid polypeptide reads, in one-letter code: Large ribosomal subunit protein bL17 (128 aa).

This sequence belongs to the bacterial ribosomal protein bL17 family. As to quaternary structure, part of the 50S ribosomal subunit. Contacts protein L32.

This Pseudomonas entomophila (strain L48) protein is Large ribosomal subunit protein bL17.